A 390-amino-acid chain; its full sequence is Cell adhesion molecule 4 (390 aa).

An N-terminal signal peptide occupies residues 1-27; that stretch reads MAPALTALNRCFVLGILLLVTAGTAFS. One can recognise an Ig-like V-type domain in the interval 28–122; the sequence is QEVQAENVTV…DTHHQIATLT (95 aa). Over 28-326 the chain is Extracellular; that stretch reads QEVQAENVTV…IEAQTQVPYA (299 aa). N-linked (GlcNAc...) asparagine glycosylation is found at Asn-34 and Asn-70. Cystine bridges form between Cys-47–Cys-107, Cys-148–Cys-202, and Cys-247–Cys-293. Ig-like C2-type domains are found at residues 127–219 and 226–309; these read PDNP…TQYE and PTAS…YVLV. Residues Asn-264 and Asn-288 are each glycosylated (N-linked (GlcNAc...) asparagine). Residues 327-347 form a helical membrane-spanning segment; the sequence is VIGGILALLVFLVICILIVMV. Residues 348–390 lie on the Cytoplasmic side of the membrane; the sequence is WCSVRQKGSYLTHEASGLDEHGEAREAFLNGGENHKRKEEFFI.

Belongs to the nectin family.

The protein localises to the membrane. In terms of biological role, involved in the cell-cell adhesion. The chain is Cell adhesion molecule 4 (cadm4) from Xenopus laevis (African clawed frog).